Reading from the N-terminus, the 342-residue chain is MTDGIVALGGGHGLYATLSAARRLTPYVTAVVTVADDGGSSGRLRSELDVVPPGDLRMALAALASDSPHGRLWATILQHRFGGSGALAGHPIGNLMLAGLSEVLADPVAALDELGRILGVKGRVLPMCPVALQIEADVSGLEADPRMFRLIRGQVAIATTPGKVRRVRLLPTDPPATRQAVDAIMAADLVVLGPGSWFTSVIPHVLVPGLAAALRATSARRALVLNLVAEPGETAGFSVERHLHVLAQHAPGFTVHDIIIDAERVPSEREREQLRRTATMLQAEVHFADVARPGTPLHDPGKLAAVLDGVCARDVGASEPPVAATQEIPIDGGRPRGDDAWR.

A disordered region spans residues 318-342 (SEPPVAATQEIPIDGGRPRGDDAWR). At threonine 325 the chain carries Phosphothreonine. The span at 333 to 342 (GRPRGDDAWR) shows a compositional bias: basic and acidic residues.

It belongs to the gluconeogenesis factor family. In terms of processing, phosphorylated by PknA and/or PknB.

It is found in the cytoplasm. Functionally, required for morphogenesis under gluconeogenic growth conditions. This is Putative gluconeogenesis factor from Mycobacterium tuberculosis (strain CDC 1551 / Oshkosh).